The following is a 339-amino-acid chain: Phenylalanine--tRNA ligase alpha subunit (339 aa).

Glu254 contacts Mg(2+).

Belongs to the class-II aminoacyl-tRNA synthetase family. Phe-tRNA synthetase alpha subunit type 1 subfamily. Tetramer of two alpha and two beta subunits. Requires Mg(2+) as cofactor.

It is found in the cytoplasm. The enzyme catalyses tRNA(Phe) + L-phenylalanine + ATP = L-phenylalanyl-tRNA(Phe) + AMP + diphosphate + H(+). In Clostridium botulinum (strain Langeland / NCTC 10281 / Type F), this protein is Phenylalanine--tRNA ligase alpha subunit.